The sequence spans 341 residues: Phosphoribosylformylglycinamidine cyclo-ligase (341 aa).

The protein belongs to the AIR synthase family.

It is found in the cytoplasm. The enzyme catalyses 2-formamido-N(1)-(5-O-phospho-beta-D-ribosyl)acetamidine + ATP = 5-amino-1-(5-phospho-beta-D-ribosyl)imidazole + ADP + phosphate + H(+). Its pathway is purine metabolism; IMP biosynthesis via de novo pathway; 5-amino-1-(5-phospho-D-ribosyl)imidazole from N(2)-formyl-N(1)-(5-phospho-D-ribosyl)glycinamide: step 2/2. In Synechocystis sp. (strain ATCC 27184 / PCC 6803 / Kazusa), this protein is Phosphoribosylformylglycinamidine cyclo-ligase.